Reading from the N-terminus, the 378-residue chain is Atypical chemokine receptor 2 (378 aa).

At 1–49 (MPTVASPLPLTTVGSENSSSIYDYDYLDDMTILVCRKDEVLSFGRVFLP) the chain is on the extracellular side. Residue asparagine 17 is glycosylated (N-linked (GlcNAc...) asparagine). A helical membrane pass occupies residues 50 to 70 (VVYSLIFVLGLAGNLLLLVVL). Topologically, residues 71–91 (LHSAPRRRTMELYLLNLAVSN) are cytoplasmic. The chain crosses the membrane as a helical span at residues 92-112 (LLFVVTMPFWAISVAWHWVFG). Residues 113 to 117 (SFLCK) are Extracellular-facing. Cysteines 116 and 194 form a disulfide. A helical transmembrane segment spans residues 118–139 (VISTLYSINFYCGIFFITCMSL). Over 140 to 161 (DKYLEIVHAQPLHRPKAQFRNL) the chain is Cytoplasmic. Residues 162-182 (LLIVMVWITSLAISVPEMVFV) form a helical membrane-spanning segment. Residues 183-216 (QIHQTLDGVWHCYADFGGHATIWKLYLRFQLNLL) are Extracellular-facing. A helical membrane pass occupies residues 217–237 (GFLLPLLAMIFFYSRIGCVLV). The Cytoplasmic segment spans residues 238–249 (RLRPPGQGRALR). Residues 250–270 (MAAALVIVFFMLWFPYNLTLF) traverse the membrane as a helical segment. The Extracellular segment spans residues 271 to 292 (LHSLLDLHVFGNCEISHRLDYT). Residues 293-313 (LQVTESLAFSHCCFTPVLYAF) traverse the membrane as a helical segment. Residues 314–378 (CSHRFRRYLK…SLNKGEMGNT (65 aa)) are Cytoplasmic-facing. The segment at 326-378 (LSVMLRWHQAPGTPSSNHSESSRVTAQEDVVSMNDLGERQSEDSLNKGEMGNT) is C-terminal cytoplasmic tail.

This sequence belongs to the G-protein coupled receptor 1 family. Atypical chemokine receptor subfamily. Post-translationally, phosphorylated on serine residues in the C-terminal cytoplasmic tail. As to expression, expressed on apoptotic neutrophils (at protein level).

It localises to the early endosome. Its subcellular location is the recycling endosome. The protein resides in the cell membrane. Functionally, atypical chemokine receptor that controls chemokine levels and localization via high-affinity chemokine binding that is uncoupled from classic ligand-driven signal transduction cascades, resulting instead in chemokine sequestration, degradation, or transcytosis. Also known as interceptor (internalizing receptor) or chemokine-scavenging receptor or chemokine decoy receptor. Acts as a receptor for chemokines including CCL2, CCL3, CCL3L1, CCL4, CCL5, CCL7, CCL8, CCL11, CCL13, CCL17, CCL22, CCL23, CCL24, SCYA2/MCP-1, SCY3/MIP-1-alpha, SCYA5/RANTES and SCYA7/MCP-3. Upon active ligand stimulation, activates a beta-arrestin 1 (ARRB1)-dependent, G protein-independent signaling pathway that results in the phosphorylation of the actin-binding protein cofilin (CFL1) through a RAC1-PAK1-LIMK1 signaling pathway. Activation of this pathway results in up-regulation of ACKR2 from endosomal compartment to cell membrane, increasing its efficiency in chemokine uptake and degradation. By scavenging chemokines in tissues, on the surfaces of lymphatic vessels, and in placenta, plays an essential role in the resolution (termination) of the inflammatory response and in the regulation of adaptive immune responses. Plays a major role in the immune silencing of macrophages during the resolution of inflammation. Acts as a regulator of inflammatory leukocyte interactions with lymphatic endothelial cells (LECs) and is required for immature/mature dendritic cells discrimination by LECs. The polypeptide is Atypical chemokine receptor 2 (Ackr2) (Mus musculus (Mouse)).